Consider the following 204-residue polypeptide: Tetraspanin-13 (204 aa).

Over 1–19 (MVCGGFSCSKNCLCALNLL) the chain is Cytoplasmic. Residues 20–40 (YTLVSLLLIGIAAWGIGFGLI) form a helical membrane-spanning segment. Over 41–44 (SSLR) the chain is Extracellular. Residues 45–65 (VVGVVIAVGIFLFLIALVGLI) form a helical membrane-spanning segment. Over 66–72 (GAVKHHQ) the chain is Cytoplasmic. A helical transmembrane segment spans residues 73–93 (VLLFFYMIILLLVFIVQFSVS). Residues 94 to 167 (CACLALNREQ…IGEYAGEVLR (74 aa)) are Extracellular-facing. N-linked (GlcNAc...) asparagine glycosylation is found at Asn-113 and Asn-137. Ser-143 is subject to Phosphoserine. Residues 168–188 (FVGGIGLFFSFTEILGVWLTY) form a helical membrane-spanning segment. The Cytoplasmic segment spans residues 189-204 (RYRNQKDPRANPSAFL).

It belongs to the tetraspanin (TM4SF) family.

The protein localises to the membrane. The sequence is that of Tetraspanin-13 (Tspan13) from Mus musculus (Mouse).